The primary structure comprises 309 residues: Carbamate kinase 2 (309 aa).

This sequence belongs to the carbamate kinase family.

It is found in the cytoplasm. It catalyses the reaction hydrogencarbonate + NH4(+) + ATP = carbamoyl phosphate + ADP + H2O + H(+). It functions in the pathway metabolic intermediate metabolism; carbamoyl phosphate degradation; CO(2) and NH(3) from carbamoyl phosphate: step 1/1. The chain is Carbamate kinase 2 (arcC2) from Staphylococcus epidermidis (strain ATCC 12228 / FDA PCI 1200).